The primary structure comprises 223 residues: MVNLKKAVCVISGGMDSALAAYKAKNSGYEIVALHFDYNQRTMNKERECFNLICDDLDVEKRFILDVGFIAQIGGNALTDKTLNIPKDGISENIPITYVPFRNGIFLSIAAALAQKEGCEAIYIGVVEEDSSGYPDCTEQFINSINKAINLGTADNNIVIKTPLVHLSKGDIVKEASSLKVPLELTWSCYENSEFACGTCDSCRLRLKGFKEAKLSDKIPYKS.

11–21 (ISGGMDSALAA) serves as a coordination point for ATP. Residues C189, C197, C200, and C203 each coordinate Zn(2+).

It belongs to the QueC family. Zn(2+) is required as a cofactor.

The catalysed reaction is 7-carboxy-7-deazaguanine + NH4(+) + ATP = 7-cyano-7-deazaguanine + ADP + phosphate + H2O + H(+). It participates in purine metabolism; 7-cyano-7-deazaguanine biosynthesis. In terms of biological role, catalyzes the ATP-dependent conversion of 7-carboxy-7-deazaguanine (CDG) to 7-cyano-7-deazaguanine (preQ(0)). The sequence is that of 7-cyano-7-deazaguanine synthase from Campylobacter fetus subsp. fetus (strain 82-40).